Consider the following 96-residue polypeptide: Cysteine protease immunity 1 (96 aa).

The chain is Cysteine protease immunity 1 from Escherichia coli O1:K1:H7 (strain ATCC 11775 / DSM 30083 / JCM 1649 / NBRC 102203 / NCTC 9001 / U5/41).